Reading from the N-terminus, the 165-residue chain is Disulfide bond formation protein B (165 aa).

The Cytoplasmic portion of the chain corresponds to Met1–Trp11. Residues Phe12–Ala28 form a helical membrane-spanning segment. The Periplasmic portion of the chain corresponds to Leu29 to Leu46. A disulfide bridge connects residues Cys38 and Cys41. A helical membrane pass occupies residues Leu47–Leu61. Topologically, residues Pro62–Leu66 are cytoplasmic. A helical transmembrane segment spans residues Leu67–Ala84. Over Tyr85–Asn142 the chain is Periplasmic. An intrachain disulfide couples Cys99 to Cys128. Residues Trp143–Arg161 traverse the membrane as a helical segment. Topologically, residues Lys162–Ala165 are cytoplasmic.

It belongs to the DsbB family.

The protein localises to the cell inner membrane. Functionally, required for disulfide bond formation in some periplasmic proteins. Acts by oxidizing the DsbA protein. The sequence is that of Disulfide bond formation protein B from Dechloromonas aromatica (strain RCB).